The chain runs to 463 residues: Retinoic acid receptor RXR-gamma (463 aa).

The segment at 1-138 (MYGNYSHFMK…TSPGSLVKHI (138 aa)) is modulating. The disordered stretch occupies residues 18–53 (SPGHTGSTSMSPSAALSTGKPMDSHPSYTDTPVSAP). The span at 21 to 33 (HTGSTSMSPSAAL) shows a compositional bias: polar residues. NR C4-type zinc fingers lie at residues 139–159 (CAICGDRSSGKHYGVYSCEGC) and 175–194 (CRDNKDCLIDKRQRNRCQYC). The segment at residues 139 to 204 (CAICGDRSSG…RYQKCLVMGM (66 aa)) is a DNA-binding region (nuclear receptor). Residues 205 to 230 (KREAVQEERQRSRERAESEAECASSG) form a hinge region. Residues 211–222 (EERQRSRERAES) are compositionally biased toward basic and acidic residues. Residues 211 to 232 (EERQRSRERAESEAECASSGHE) are disordered. Residues 231–459 (HEDMPVERIL…TFLMEMLETP (229 aa)) enclose the NR LBD domain.

The protein belongs to the nuclear hormone receptor family. NR2 subfamily. Homodimer. Heterodimer with a RAR molecule. Binds DNA preferentially as a RAR/RXR heterodimer. Interacts with RARA. In terms of processing, acetylated by EP300.

It is found in the nucleus. Its subcellular location is the cytoplasm. In terms of biological role, receptor for retinoic acid. Retinoic acid receptors bind as heterodimers to their target response elements in response to their ligands, all-trans or 9-cis retinoic acid, and regulate gene expression in various biological processes. The RAR/RXR heterodimers bind to the retinoic acid response elements (RARE) composed of tandem 5'-AGGTCA-3' sites known as DR1-DR5. The high affinity ligand for RXRs is 9-cis retinoic acid. The polypeptide is Retinoic acid receptor RXR-gamma (RXRG) (Pongo abelii (Sumatran orangutan)).